The sequence spans 270 residues: Phosphate import ATP-binding protein PstB 2 (270 aa).

Residues 25-265 (LQAKDINIYY…PEKKQTEDYI (241 aa)) form the ABC transporter domain. Residue 57–64 (GPSGCGKS) coordinates ATP.

Belongs to the ABC transporter superfamily. Phosphate importer (TC 3.A.1.7) family. In terms of assembly, the complex is composed of two ATP-binding proteins (PstB), two transmembrane proteins (PstC and PstA) and a solute-binding protein (PstS).

It is found in the cell membrane. The enzyme catalyses phosphate(out) + ATP + H2O = ADP + 2 phosphate(in) + H(+). Functionally, part of the ABC transporter complex PstSACB involved in phosphate import. Responsible for energy coupling to the transport system. This Shouchella clausii (strain KSM-K16) (Alkalihalobacillus clausii) protein is Phosphate import ATP-binding protein PstB 2.